The sequence spans 640 residues: Threonine--tRNA ligase (640 aa).

Residues 1 to 61 (MPVITLPDGS…SNDATLQIIT (61 aa)) enclose the TGS domain. A catalytic region spans residues 242-533 (DHRKIGKQLD…LIEHYAGVFP (292 aa)). 3 residues coordinate Zn(2+): C333, H384, and H510.

Belongs to the class-II aminoacyl-tRNA synthetase family. In terms of assembly, homodimer. It depends on Zn(2+) as a cofactor.

The protein localises to the cytoplasm. It catalyses the reaction tRNA(Thr) + L-threonine + ATP = L-threonyl-tRNA(Thr) + AMP + diphosphate + H(+). Functionally, catalyzes the attachment of threonine to tRNA(Thr) in a two-step reaction: L-threonine is first activated by ATP to form Thr-AMP and then transferred to the acceptor end of tRNA(Thr). Also edits incorrectly charged L-seryl-tRNA(Thr). The polypeptide is Threonine--tRNA ligase (Pseudomonas putida (strain ATCC 47054 / DSM 6125 / CFBP 8728 / NCIMB 11950 / KT2440)).